The chain runs to 587 residues: MKRKTKIVCTIGPASESVDKLVQLMEAGMNVARLNFSHGDHEEHGRRIANIREAAKRTGRTVAILLDTKGPEIRTHNMENGAIELKEGSKLVISMSEVLGTPEKISVTYPSLIDDVSVGAKILLDDGLISLEVNAVDKQAGEIVTTVLNGGVLKNKKGVNVPGVKVNLPGITEKDRADILFGIRQGIDFIAASFVRRASDVLEIRELLEAHDALHIQIIAKIENEEGVANIDEILEAADGLMVARGDLGVEIPAEEVPLIQKLLIKKCNMLGKPVITATQMLDSMQRNPRPTRAEASDVANAIFDGTDAVMLSGETAAGQYPVEAVKTMHQIALRTEQALEHRDILSQRTKESQTTITDAIGQSVAHTALNLDVAAIVTPTVSGKTPQMVAKYRPKAPIIAVTSNEAVSRRLALVWGVYTKEAPHVNTTDEMLDVAVDAAVRSGLVKHGDLVVITAGVPVGETGSTNLMKVHVISDLLAKGQGIGRKSAFGKAVVAKTAEEARQKMVDGGILVTVSTDADMMPAIEKAAAIITEEGGLTSHAAVVGLSLGIPVIVGVENATTLFKDGQEITVDGGFGAVYRGHASVL.

Substrate is bound at residue Arg-33. Residues Asn-35, Ser-37, Asp-67, and Thr-68 each contribute to the K(+) site. Residue Asn-35–His-38 coordinates ATP. 2 residues coordinate ATP: Arg-74 and Lys-157. Lys-221 lines the substrate pocket. Glu-223 serves as a coordination point for Mg(2+). 3 residues coordinate substrate: Gly-246, Asp-247, and Thr-279. A Mg(2+)-binding site is contributed by Asp-247.

It belongs to the pyruvate kinase family. This sequence in the C-terminal section; belongs to the PEP-utilizing enzyme family. As to quaternary structure, homotetramer. It depends on Mg(2+) as a cofactor. K(+) serves as cofactor. The N-terminus is blocked.

The enzyme catalyses pyruvate + ATP = phosphoenolpyruvate + ADP + H(+). The protein operates within carbohydrate degradation; glycolysis; pyruvate from D-glyceraldehyde 3-phosphate: step 5/5. Exhibits homotropic positive cooperativity for PEP. Allosterically activated by ribose-5-phosphate, AMP and other nucleoside monophosphates but not by fructose-1,6-bisphosphate. Its function is as follows. Catalyzes the phosphoryl transfer from phosphoenolpyruvate (PEP) to ADP to form pyruvate and ATP. Has a broad specificity for nucleoside diphosphates and can use ADP, GDP, IDP and UDP. The chain is Pyruvate kinase (pyk) from Geobacillus stearothermophilus (Bacillus stearothermophilus).